Here is a 531-residue protein sequence, read N- to C-terminus: Efflux pump terG (531 aa).

The segment covering 1–11 (MSSSTLEGQET) has biased composition (polar residues). A disordered region spans residues 1 to 27 (MSSSTLEGQETASHHSKNSPSRHGDDG). 13 consecutive transmembrane segments (helical) span residues 86–106 (GKLSWTISGYGLTLGTFILIG), 117–137 (AIFVIGMGWLALTSMMAGVSV), 145–165 (ILARVLQGLGPALTVPNALAI), 179–199 (FAWFAASAPVGAMAGLLFGPL), 207–227 (WIYWSQALGVAFVFALSIVAI), 249–269 (IDLLGGACGVTALVLFNFAWN), 280–300 (YVYVCLILSFLFLAAFFYVEL), 319–339 (FVFGCTAAGWSTFGIWLFYVI), 351–371 (IQMAAWLSPILVTGIGTALIV), 380–400 (ASSIMLFAMLCYFITSLLMAL), 402–422 (PVHSIYWTYFFFATIIATFAM), 447–467 (SVIMTIVVYSISLGLGFAGTI), and 488–508 (TLWFSVGLTAFGTVLALIFLL).

Belongs to the major facilitator superfamily.

Its subcellular location is the cell membrane. In terms of biological role, efflux pump that might be required for efficient secretion of terrein or other secondary metabolies produced by the terrein genne cluster. The sequence is that of Efflux pump terG from Aspergillus terreus (strain NIH 2624 / FGSC A1156).